The chain runs to 294 residues: MSDRLIKAVAKDGQVRIIVADTRELVNKGIKIHNCAPTAAAALGRMLTAGVIMGSMLKSDKDVITLKIDGGGEAKGVTVTSYANANVKGYIGNPSVDLEANALGKLDVGGAIGKNGSLLVIRDFGLKEPYVGNVPIYTGEVGDDIAYYFTVSEQTPTAVGLGVLVDKDLSIRKAGGVIIQMMPGADEMLADLITYRLQDLGSITSFLDSGKTIDDMLNFLFDDMDLKILEEMTPEYSCDCSREKIERALISIGEKDLKEIYNDGKTEEIVCQFCGEHYKFTNEEIGELLKNVRK.

Disulfide bonds link C238/C240 and C271/C274.

It belongs to the HSP33 family. Post-translationally, under oxidizing conditions two disulfide bonds are formed involving the reactive cysteines. Under reducing conditions zinc is bound to the reactive cysteines and the protein is inactive.

It localises to the cytoplasm. In terms of biological role, redox regulated molecular chaperone. Protects both thermally unfolding and oxidatively damaged proteins from irreversible aggregation. Plays an important role in the bacterial defense system toward oxidative stress. The polypeptide is 33 kDa chaperonin (Clostridium novyi (strain NT)).